Reading from the N-terminus, the 424-residue chain is Probable serine/threonine-protein kinase PBL6 (424 aa).

The disordered stretch occupies residues 1–26; that stretch reads MGCFGRTPKSNKRSDTKTTKNNDFTP. G2 carries the N-myristoyl glycine lipid modification. C3 is lipidated: S-palmitoyl cysteine. A Phosphothreonine modification is found at T87. Residues 98-377 enclose the Protein kinase domain; it reads FKSDCFLGEG…VVMALDHLAS (280 aa). Residues 104–112 and K127 contribute to the ATP site; that span reads LGEGGFGKV. Y172 is subject to Phosphotyrosine. D225 (proton acceptor) is an active-site residue. 2 positions are modified to phosphoserine: S229 and S259. T260 and T265 each carry phosphothreonine. Residue Y273 is modified to Phosphotyrosine.

The protein belongs to the protein kinase superfamily. Ser/Thr protein kinase family.

The protein resides in the cell membrane. It catalyses the reaction L-seryl-[protein] + ATP = O-phospho-L-seryl-[protein] + ADP + H(+). The catalysed reaction is L-threonyl-[protein] + ATP = O-phospho-L-threonyl-[protein] + ADP + H(+). In terms of biological role, may be involved in plant defense signaling. This Arabidopsis thaliana (Mouse-ear cress) protein is Probable serine/threonine-protein kinase PBL6.